Reading from the N-terminus, the 367-residue chain is Glutamate 5-kinase (367 aa).

An ATP-binding site is contributed by Lys-9. Substrate-binding residues include Ser-49, Asp-136, and Asn-148. Residues 168–169 and 210–216 contribute to the ATP site; these read TD and TGGMKSK. A PUA domain is found at 276-350; it reads SGQIEIDAGA…GMQSQHIQAR (75 aa).

The protein belongs to the glutamate 5-kinase family.

Its subcellular location is the cytoplasm. It carries out the reaction L-glutamate + ATP = L-glutamyl 5-phosphate + ADP. It participates in amino-acid biosynthesis; L-proline biosynthesis; L-glutamate 5-semialdehyde from L-glutamate: step 1/2. Catalyzes the transfer of a phosphate group to glutamate to form L-glutamate 5-phosphate. The sequence is that of Glutamate 5-kinase from Bacillus cereus (strain ATCC 10987 / NRS 248).